A 205-amino-acid chain; its full sequence is NADH-quinone oxidoreductase subunit J (205 aa).

Helical transmembrane passes span 1-21 (MPIF…CVVL), 26-46 (VYSV…MILL), 54-74 (LLIV…IMML), 89-109 (LSLS…TVIL), and 142-162 (FMLP…SCIT).

The protein belongs to the complex I subunit 6 family.

The protein resides in the cell membrane. The enzyme catalyses a quinone + NADH + 5 H(+)(in) = a quinol + NAD(+) + 4 H(+)(out). NDH-1 shuttles electrons from NADH, via FMN and iron-sulfur (Fe-S) centers, to quinones in the respiratory chain. Couples the redox reaction to proton translocation (for every two electrons transferred, four hydrogen ions are translocated across the cytoplasmic membrane), and thus conserves the redox energy in a proton gradient. In Rickettsia typhi (strain ATCC VR-144 / Wilmington), this protein is NADH-quinone oxidoreductase subunit J (nuoJ).